We begin with the raw amino-acid sequence, 132 residues long: Iron-sulfur cluster assembly 1 homolog, mitochondrial (132 aa).

A mitochondrion-targeting transit peptide spans 1 to 15; the sequence is MASSASSVVRATVRA. Fe cation is bound by residues Cys-60, Cys-124, and Cys-126.

This sequence belongs to the HesB/IscA family. As to quaternary structure, homooligomer, forming a rod-shaped structure 24 nm in length that may arise through a double-helical assembly of subunits. Interacts with CRY4; CRY4 seems to be associated with the outside of the rod-shaped homooligomer. Does not interact with CRY1 or CRY2. As to expression, detected in retina, especially in the retinal ganglion layer, the inner nuclear layer and the outer nuclear layer. Detected in retina visual pigment cells (at protein level).

It is found in the mitochondrion. Involved in the maturation of mitochondrial 4Fe-4S proteins functioning late in the iron-sulfur cluster assembly pathway. Probably involved in the binding of an intermediate of Fe/S cluster assembly. Component of a putative magnetoreceptor complex formed by ISCA1 and CRY4, a member of the cryptochrome family that are known to be required for light-dependent magnetosensitivity in various orgnisms. The rod-like assembly may facilitate the perception of the Earth's weak magnetic field. Both ISCA1 and the complex with CRY4 have magnetic properties and are attracted to iron beads. When exposed to a magnetic field of 1 mT (superior to the natural magnetic field), over 50% of the rod-like complexes align more or less in parallel with the magnetic field at room temperature. The chain is Iron-sulfur cluster assembly 1 homolog, mitochondrial (ISCA1) from Columba livia (Rock dove).